A 389-amino-acid chain; its full sequence is MEETNTHCAPPPPAGSQTGVSQANLSSAPPNCSTEGYIYQDSIALPWKVLLILVLALFTLATTLSNAFVIATVYRTRKLHTPANYLIASLAVTDLLVSILVMPISTMYTVTGRWTLGQVVCDFWLSSDITCCTASILHLCVIALDRYWAITDAVEYSAKRTPKRAAVMIALVWVFSISISLPPFFWRQAKAEEEVSDCRVNTDHMLYTVYSTVGAFYFPTLLLIALYGRIYVEARSRILKQTPNRTGKRLTRAQLITDSPGSTSSVTSVNSRAPDVPSESGSPVYVNQVKVRVSDALLEKKKLMAARERKATKTLGIILGAFIVCWLPFFIISLVMPICKDACWFHLAIFDFFTWLGYLNSLINPIIYTMSNEDFKQAFHKLIRFKCTG.

The interval 1–27 (MEETNTHCAPPPPAGSQTGVSQANLSS) is disordered. Residues 1 to 45 (MEETNTHCAPPPPAGSQTGVSQANLSSAPPNCSTEGYIYQDSIAL) are Extracellular-facing. Over residues 15–27 (GSQTGVSQANLSS) the composition is skewed to polar residues. 2 N-linked (GlcNAc...) asparagine glycosylation sites follow: asparagine 24 and asparagine 31. The helical transmembrane segment at 46 to 71 (PWKVLLILVLALFTLATTLSNAFVIA) threads the bilayer. Over 72–85 (TVYRTRKLHTPANY) the chain is Cytoplasmic. Residues 86 to 110 (LIASLAVTDLLVSILVMPISTMYTV) form a helical membrane-spanning segment. Residues 111–118 (TGRWTLGQ) lie on the Extracellular side of the membrane. Residues 119–144 (VVCDFWLSSDITCCTASILHLCVIAL) traverse the membrane as a helical segment. Cysteine 121 and cysteine 198 are oxidised to a cystine. Positions 128 and 133 each coordinate ergotamine. The DRY motif; important for ligand-induced conformation changes and signaling signature appears at 145-147 (DRY). Topologically, residues 145–164 (DRYWAITDAVEYSAKRTPKR) are cytoplasmic. Residues 165–183 (AAVMIALVWVFSISISLPP) traverse the membrane as a helical segment. At 184–204 (FFWRQAKAEEEVSDCRVNTDH) the chain is on the extracellular side. Ergotamine is bound at residue valine 200. The chain crosses the membrane as a helical span at residues 205–228 (MLYTVYSTVGAFYFPTLLLIALYG). Topologically, residues 229–314 (RIYVEARSRI…AARERKATKT (86 aa)) are cytoplasmic. The span at 258–271 (DSPGSTSSVTSVNS) shows a compositional bias: polar residues. The interval 258–281 (DSPGSTSSVTSVNSRAPDVPSESG) is disordered. The helical transmembrane segment at 315–336 (LGIILGAFIVCWLPFFIISLVM) threads the bilayer. Topologically, residues 337 to 346 (PICKDACWFH) are extracellular. The helical transmembrane segment at 347–369 (LAIFDFFTWLGYLNSLINPIIYT) threads the bilayer. The short motif at 364 to 368 (NPIIY) is the NPxxY motif; important for ligand-induced conformation changes and signaling element. Topologically, residues 370 to 389 (MSNEDFKQAFHKLIRFKCTG) are cytoplasmic. Cysteine 387 carries S-palmitoyl cysteine lipidation.

The protein belongs to the G-protein coupled receptor 1 family. Homodimer. Heterodimer with HTR1D. In terms of processing, phosphorylated. Desensitization of the receptor may be mediated by its phosphorylation. Palmitoylated.

It is found in the cell membrane. Its function is as follows. G-protein coupled receptor for 5-hydroxytryptamine (serotonin). Also functions as a receptor for ergot alkaloid derivatives, various anxiolytic and antidepressant drugs and other psychoactive substances, such as lysergic acid diethylamide (LSD). Ligand binding causes a conformation change that triggers signaling via guanine nucleotide-binding proteins (G proteins) and modulates the activity of downstream effectors, such as adenylate cyclase. HTR1B is coupled to G(i)/G(o) G alpha proteins and mediates inhibitory neurotransmission by inhibiting adenylate cyclase activity. Arrestin family members inhibit signaling via G proteins and mediate activation of alternative signaling pathways. Regulates the release of 5-hydroxytryptamine, dopamine and acetylcholine in the brain, and thereby affects neural activity, nociceptive processing, pain perception, mood and behavior. Besides, plays a role in vasoconstriction of cerebral arteries. This Felis catus (Cat) protein is 5-hydroxytryptamine receptor 1B (HTR1B).